Reading from the N-terminus, the 376-residue chain is Queuine tRNA-ribosyltransferase (376 aa).

The active-site Proton acceptor is the Asp93. Substrate-binding positions include 93 to 97 (DSGGF), Asp147, Gln190, and Gly217. Residues 248-254 (GVGTPDD) form an RNA binding region. Catalysis depends on Asp267, which acts as the Nucleophile. The RNA binding; important for wobble base 34 recognition stretch occupies residues 272–276 (TRSGR).

The protein belongs to the queuine tRNA-ribosyltransferase family. Homodimer. Within each dimer, one monomer is responsible for RNA recognition and catalysis, while the other monomer binds to the replacement base PreQ1.

The catalysed reaction is 7-aminomethyl-7-carbaguanine + guanosine(34) in tRNA = 7-aminomethyl-7-carbaguanosine(34) in tRNA + guanine. It participates in tRNA modification; tRNA-queuosine biosynthesis. Functionally, catalyzes the base-exchange of a guanine (G) residue with the queuine precursor 7-aminomethyl-7-deazaguanine (PreQ1) at position 34 (anticodon wobble position) in tRNAs with GU(N) anticodons (tRNA-Asp, -Asn, -His and -Tyr). Catalysis occurs through a double-displacement mechanism. The nucleophile active site attacks the C1' of nucleotide 34 to detach the guanine base from the RNA, forming a covalent enzyme-RNA intermediate. The proton acceptor active site deprotonates the incoming PreQ1, allowing a nucleophilic attack on the C1' of the ribose to form the product. After dissociation, two additional enzymatic reactions on the tRNA convert PreQ1 to queuine (Q), resulting in the hypermodified nucleoside queuosine (7-(((4,5-cis-dihydroxy-2-cyclopenten-1-yl)amino)methyl)-7-deazaguanosine). This is Queuine tRNA-ribosyltransferase from Rhizobium meliloti (strain 1021) (Ensifer meliloti).